Reading from the N-terminus, the 104-residue chain is Pyrimidine/purine nucleoside phosphorylase (104 aa).

Belongs to the nucleoside phosphorylase PpnP family.

The catalysed reaction is a purine D-ribonucleoside + phosphate = a purine nucleobase + alpha-D-ribose 1-phosphate. The enzyme catalyses adenosine + phosphate = alpha-D-ribose 1-phosphate + adenine. It carries out the reaction cytidine + phosphate = cytosine + alpha-D-ribose 1-phosphate. It catalyses the reaction guanosine + phosphate = alpha-D-ribose 1-phosphate + guanine. The catalysed reaction is inosine + phosphate = alpha-D-ribose 1-phosphate + hypoxanthine. The enzyme catalyses thymidine + phosphate = 2-deoxy-alpha-D-ribose 1-phosphate + thymine. It carries out the reaction uridine + phosphate = alpha-D-ribose 1-phosphate + uracil. It catalyses the reaction xanthosine + phosphate = alpha-D-ribose 1-phosphate + xanthine. Functionally, catalyzes the phosphorolysis of diverse nucleosides, yielding D-ribose 1-phosphate and the respective free bases. Can use uridine, adenosine, guanosine, cytidine, thymidine, inosine and xanthosine as substrates. Also catalyzes the reverse reactions. This is Pyrimidine/purine nucleoside phosphorylase from Leptospira borgpetersenii serovar Hardjo-bovis (strain L550).